A 508-amino-acid polypeptide reads, in one-letter code: Histidine ammonia-lyase (508 aa).

Residues 143–145 (ASG) constitute a cross-link (5-imidazolinone (Ala-Gly)). Serine 144 carries the 2,3-didehydroalanine (Ser) modification.

The protein belongs to the PAL/histidase family. In terms of processing, contains an active site 4-methylidene-imidazol-5-one (MIO), which is formed autocatalytically by cyclization and dehydration of residues Ala-Ser-Gly.

The protein localises to the cytoplasm. The catalysed reaction is L-histidine = trans-urocanate + NH4(+). The protein operates within amino-acid degradation; L-histidine degradation into L-glutamate; N-formimidoyl-L-glutamate from L-histidine: step 1/3. This Anaeromyxobacter dehalogenans (strain 2CP-C) protein is Histidine ammonia-lyase.